The sequence spans 444 residues: UDP-N-acetylmuramoylalanine--D-glutamate ligase (444 aa).

118–124 (GTNGKTT) is a binding site for ATP.

Belongs to the MurCDEF family.

The protein localises to the cytoplasm. It carries out the reaction UDP-N-acetyl-alpha-D-muramoyl-L-alanine + D-glutamate + ATP = UDP-N-acetyl-alpha-D-muramoyl-L-alanyl-D-glutamate + ADP + phosphate + H(+). The protein operates within cell wall biogenesis; peptidoglycan biosynthesis. In terms of biological role, cell wall formation. Catalyzes the addition of glutamate to the nucleotide precursor UDP-N-acetylmuramoyl-L-alanine (UMA). This Protochlamydia amoebophila (strain UWE25) protein is UDP-N-acetylmuramoylalanine--D-glutamate ligase.